The following is a 345-amino-acid chain: Beta-2-glycoprotein 1 (345 aa).

Positions 1-19 are cleaved as a signal peptide; the sequence is MISLGLILFSSVLCHVATA. Sushi domains lie at 21 to 81, 82 to 139, 140 to 202, and 203 to 262; these read RTCP…RCIP, RVCP…VCTR, VTCP…ECRE, and VKCP…SCKA. Disulfide bonds link Cys-23–Cys-66, Cys-51–Cys-79, Cys-84–Cys-124, Cys-110–Cys-137, Cys-142–Cys-188, Cys-174–Cys-200, Cys-205–Cys-248, Cys-234–Cys-260, Cys-264–Cys-315, Cys-300–Cys-325, and Cys-307–Cys-345. O-linked (GalNAc...) threonine glycosylation occurs at Thr-33. N-linked (GlcNAc...) asparagine glycans are attached at residues Asn-117, Asn-162, Asn-183, and Asn-193. A glycan (N-linked (GlcNAc...) asparagine) is linked at Asn-253. Residues 263–345 are sushi-like; sequence SCKLSVKKAT…KTDASDVKPC (83 aa).

Expressed by the liver and secreted in plasma.

It is found in the secreted. Functionally, binds to various kinds of negatively charged substances such as heparin, phospholipids, and dextran sulfate. May prevent activation of the intrinsic blood coagulation cascade by binding to phospholipids on the surface of damaged cells. The chain is Beta-2-glycoprotein 1 (APOH) from Canis lupus familiaris (Dog).